Consider the following 797-residue polypeptide: Probable exo-1,4-beta-xylosidase bxlB (797 aa).

Residues methionine 1 to alanine 21 form the signal peptide. Asparagine 86 and asparagine 126 each carry an N-linked (GlcNAc...) asparagine glycan. Aspartate 312 is a catalytic residue. N-linked (GlcNAc...) asparagine glycosylation is found at asparagine 364, asparagine 431, asparagine 442, asparagine 483, asparagine 644, and asparagine 787.

This sequence belongs to the glycosyl hydrolase 3 family.

It is found in the secreted. The enzyme catalyses Hydrolysis of (1-&gt;4)-beta-D-xylans, to remove successive D-xylose residues from the non-reducing termini.. It participates in glycan degradation; xylan degradation. In terms of biological role, xylan 1,4-beta-xylosidase involved in the hydrolysis of xylan, a major structural heterogeneous polysaccharide found in plant biomass representing the second most abundant polysaccharide in the biosphere, after cellulose. The polypeptide is Probable exo-1,4-beta-xylosidase bxlB (bxlB) (Aspergillus oryzae (strain ATCC 42149 / RIB 40) (Yellow koji mold)).